A 156-amino-acid chain; its full sequence is Proline dehydrogenase transcriptional activator (156 aa).

Residues 10-71 (LDHFDLKILE…VLNPQKLGVD (62 aa)) form the HTH asnC-type domain. Residues 29–48 (VLQLSKRVGLSKTPCQTRLK) constitute a DNA-binding region (H-T-H motif).

Functionally, transcriptional activator of the putA gene in response to proline. The chain is Proline dehydrogenase transcriptional activator (putR) from Rhizobium radiobacter (Agrobacterium tumefaciens).